Consider the following 222-residue polypeptide: MVSYHICEYQDSDYKSVVDVFTKGAEEYIPSTFRHLLLLPRTLLLLLGVSLALVLVSGSWLLAVVCIFFLLPFLWFLAGQPWKNYVSKCLHTDMADITKSYLSDRGSGFWVAESGEQVVGTVGALPVKEPPSGRKQLQLFHLAVSSQHRGQGIAKALVRTVLQFARDQGYTDVVLETSTMQIGAVTLYLGMGFQKTGQYFPSMLWRLVGIRFVQLNYSFPSA.

The Cytoplasmic portion of the chain corresponds to 1–42 (MVSYHICEYQDSDYKSVVDVFTKGAEEYIPSTFRHLLLLPRT). The chain crosses the membrane as a helical; Signal-anchor for type II membrane protein span at residues 43-67 (LLLLLGVSLALVLVSGSWLLAVVCI). The 156-residue stretch at 62-217 (LAVVCIFFLL…VGIRFVQLNY (156 aa)) folds into the N-acetyltransferase domain. The Lumenal portion of the chain corresponds to 68–222 (FFLLPFLWFL…VQLNYSFPSA (155 aa)). Residue Lys-99 is modified to N6-acetyllysine.

This sequence belongs to the NAT8 family. Acetylation on Lys-99 modulates enzymatic activity.

The protein localises to the endoplasmic reticulum-Golgi intermediate compartment membrane. It is found in the endoplasmic reticulum membrane. The catalysed reaction is L-lysyl-[protein] + acetyl-CoA = N(6)-acetyl-L-lysyl-[protein] + CoA + H(+). Functionally, endoplasmic reticulum (ER)-membrane-bound lysine N-acetyltransferase catalyzing the N6-acetylation of lysine residues in the lumen of the ER in various proteins, including PROM1 and BACE1, using acetyl-CoA as acetyl donor. Thereby, may regulate apoptosis through the acetylation and the regulation of the expression of PROM1. Acetylates and stabilizes BACE1 immature protein, leading to increased steady-state levels in neurons. By acting on BACE1 expression, may regulate amyloid beta-peptide formation. N(6)-lysine acetylation in ER maintains protein homeostasis and regulates reticulophagy. This Rattus norvegicus (Rat) protein is N-acetyltransferase 8B.